The sequence spans 162 residues: Putative ripening-related protein 7 (162 aa).

An N-terminal signal peptide occupies residues Met-1–Ala-30.

This sequence belongs to the kiwellin family.

Its subcellular location is the secreted. This Oryza sativa subsp. japonica (Rice) protein is Putative ripening-related protein 7.